Here is a 470-residue protein sequence, read N- to C-terminus: 6-phospho-beta-galactosidase (470 aa).

Residues glutamine 19, histidine 116, asparagine 159, glutamate 160, and asparagine 297 each coordinate D-galactose 6-phosphate. Glutamate 160 serves as the catalytic Proton donor. The active-site Nucleophile is the glutamate 375. D-galactose 6-phosphate contacts are provided by serine 430, tryptophan 431, lysine 437, and tyrosine 439.

The protein belongs to the glycosyl hydrolase 1 family.

The catalysed reaction is a 6-phospho-beta-D-galactoside + H2O = D-galactose 6-phosphate + an alcohol. It functions in the pathway carbohydrate metabolism; lactose degradation; D-galactose 6-phosphate and beta-D-glucose from lactose 6-phosphate: step 1/1. This chain is 6-phospho-beta-galactosidase, found in Staphylococcus aureus (strain MRSA252).